The sequence spans 298 residues: MATANLRRGYVLGLTAYVIWGLFPLYFKLLERIPAVEIIVQRAVWSALFGAVLLLFWKHPGWWRELRQNPQRFVVLAASGLLIASNWMTYVWAVNNGHMLEASLGYYINPLINVMLGMLLLKERLRPLQWLAVALASLGVAQQVWQLGSLPWVSLVLALTFGFYGLIRKKAPVAALPGLVVETWLLLPLALVWLLFFADGPTSETAFWSTPEALWVVAAGPVTLVPLVCFNAAARHLPYATLGFLQYLAPTLVLLQAILLFGEHLDSSRLTAFAFIWLALAVYSFDAWRSLRRLPQPG.

10 helical membrane-spanning segments follow: residues 9 to 28 (GYVL…LYFK), 38 to 60 (IIVQ…WKHP), 72 to 94 (RFVV…VWAV), 104 to 121 (LGYY…MLLL), 128 to 145 (LQWL…QQVW), 150 to 167 (LPWV…YGLI), 174 to 196 (AALP…WLLF), 211 to 233 (PEAL…FNAA), 240 to 262 (ATLG…LLFG), and 272 to 291 (AFAF…WRSL). Residues 18 to 141 (VIWGLFPLYF…AVALASLGVA (124 aa)) form the EamA domain.

It belongs to the EamA transporter family.

Its subcellular location is the cell membrane. This is an uncharacterized protein from Pseudomonas aeruginosa (strain ATCC 15692 / DSM 22644 / CIP 104116 / JCM 14847 / LMG 12228 / 1C / PRS 101 / PAO1).